The chain runs to 185 residues: Sarcoplasmic calcium-binding proteins I, III, and IV (185 aa).

EF-hand domains lie at 5–41, 57–92, 102–137, and 138–173; these read FQKQKIKFTFDFFLDYNKDGSIQWEDFEEMIKRYKEV, SLEDEWRDLKGRADINKDDVVSWEEYLAMWEKTIAT, WCQNRIPFLFKGMDVSGDGIVDLEEFQNYCKNFQLQ, and CADVPAVYNVITDGGKVTFDLNRYKELYYRLLTSPA. The Ca(2+) site is built by D19, N21, D23, S25, D30, D70, N72, D74, E81, D115, S117, D119, and E126.

Its function is as follows. Like parvalbumins, SCPs seem to be more abundant in fast contracting muscles, but no functional relationship can be established from this distribution. The polypeptide is Sarcoplasmic calcium-binding proteins I, III, and IV (Branchiostoma lanceolatum (Common lancelet)).